Reading from the N-terminus, the 379-residue chain is Serine/threonine-protein kinase spe-6 (379 aa).

Positions 26–302 (WKVLRNIYSG…SQAATEHQVT (277 aa)) constitute a Protein kinase domain. ATP is bound by residues 32-40 (IYSGPFSDV) and Lys55. Asp147 serves as the catalytic Proton acceptor. The disordered stretch occupies residues 331-379 (ASAKLDAKDNANESMDIEFDDMPPKEGISKSLSAEKSCTKNVETARTEK). Over residues 360 to 372 (KSLSAEKSCTKNV) the composition is skewed to polar residues.

It belongs to the protein kinase superfamily. CK1 Ser/Thr protein kinase family.

It carries out the reaction L-seryl-[protein] + ATP = O-phospho-L-seryl-[protein] + ADP + H(+). It catalyses the reaction L-threonyl-[protein] + ATP = O-phospho-L-threonyl-[protein] + ADP + H(+). Serine/threonine-protein kinase which is involved in spermatogenesis. In spermatocytes, regulates meiosis and the localization and assembly of major sperm protein (MSP) into fibrous bodies. In addition, may suppress the initiation of spermiogenesis downstream of spe-8, spe-12, spe-27 and spe-29. The polypeptide is Serine/threonine-protein kinase spe-6 (Caenorhabditis elegans).